Reading from the N-terminus, the 130-residue chain is Small ribosomal subunit protein uS9 (130 aa).

The protein belongs to the universal ribosomal protein uS9 family.

The protein is Small ribosomal subunit protein uS9 of Janthinobacterium sp. (strain Marseille) (Minibacterium massiliensis).